Consider the following 210-residue polypeptide: Probable HTH-type transcriptional regulator ArpR (210 aa).

The HTH tetR-type domain occupies Gln10 to His70. Residues Thr33 to Phe52 constitute a DNA-binding region (H-T-H motif).

Its function is as follows. Probable regulatory protein for the antibiotic efflux pump arpABC operon. May function as a repressor. The protein is Probable HTH-type transcriptional regulator ArpR (arpR) of Pseudomonas putida (Arthrobacter siderocapsulatus).